The chain runs to 171 residues: MATIGEVEVFVDHGADDVFITYPLWIGTRQADRLRQLADRARIAVGAGTAEGASNTGARLADAAGAIDVLIEIDSGHHRSGVRAEQVLEVAHAVGEAGLHLVGVFTFPGHSYAPGKPGEAGEQERRALNDAANALVAVGFPISCRSGGSTPTALLTAADGASETSRRLCAR.

This is an uncharacterized protein from Mycobacterium tuberculosis (strain ATCC 25618 / H37Rv).